We begin with the raw amino-acid sequence, 610 residues long: UvrABC system protein C (610 aa).

Residues 16–94 (SQPGVYRMYD…IKLYQPRYNV (79 aa)) form the GIY-YIG domain. Positions 204–239 (DQVLTQLISRMETASQNLEFEEAARIRDQIQAVRRV) constitute a UVR domain.

This sequence belongs to the UvrC family. As to quaternary structure, interacts with UvrB in an incision complex.

The protein localises to the cytoplasm. Functionally, the UvrABC repair system catalyzes the recognition and processing of DNA lesions. UvrC both incises the 5' and 3' sides of the lesion. The N-terminal half is responsible for the 3' incision and the C-terminal half is responsible for the 5' incision. This Escherichia coli O1:K1 / APEC protein is UvrABC system protein C.